A 349-amino-acid chain; its full sequence is tRNA pseudouridine synthase D (349 aa).

A substrate-binding site is contributed by phenylalanine 27. Aspartate 80 functions as the Nucleophile in the catalytic mechanism. Residue asparagine 129 participates in substrate binding. One can recognise a TRUD domain in the interval glycine 155–leucine 303. Position 329 (phenylalanine 329) interacts with substrate.

It belongs to the pseudouridine synthase TruD family.

The enzyme catalyses uridine(13) in tRNA = pseudouridine(13) in tRNA. Functionally, responsible for synthesis of pseudouridine from uracil-13 in transfer RNAs. In Escherichia coli O9:H4 (strain HS), this protein is tRNA pseudouridine synthase D.